The following is a 520-amino-acid chain: Glucose starvation modulator protein 1 (520 aa).

A DNA-binding region (zn(2)-C6 fungal-type) is located at residues 20–48 (CVFCHEKHLQCSNERPCKNCVKRGLAHEC). One can recognise a PAS domain in the interval 376–445 (DYEKLSQLNS…FRLFKTVAVG (70 aa)).

Belongs to the ERT1/acuK family.

The protein localises to the nucleus. Functionally, transcription factor which regulates nonfermentable carbon utilization. The polypeptide is Glucose starvation modulator protein 1 (GSM1) (Scheffersomyces stipitis (strain ATCC 58785 / CBS 6054 / NBRC 10063 / NRRL Y-11545) (Yeast)).